The primary structure comprises 319 residues: N-acetyl-D-glucosamine kinase (319 aa).

T14 contacts ATP. N37 and D113 together coordinate substrate. T135 contributes to the ATP binding site. Substrate contacts are provided by residues G153–G155 and D160. A220 is a binding site for ATP.

This sequence belongs to the eukaryotic-type N-acetylglucosamine kinase family. In terms of assembly, homodimer.

The enzyme catalyses N-acetyl-D-glucosamine + ATP = N-acetyl-D-glucosamine 6-phosphate + ADP + H(+). Converts N-acetylglucosamine (GlcNAc), a major component of complex carbohydrates, into GlcNAc 6-phosphate. Also has ManNAc kinase activity. The sequence is that of N-acetyl-D-glucosamine kinase (nagk) from Dictyostelium discoideum (Social amoeba).